A 241-amino-acid polypeptide reads, in one-letter code: Pyridoxal phosphate phosphatase PHOSPHO2 (241 aa).

The Nucleophile role is filled by D8. Mg(2+) contacts are provided by D8 and D10. Catalysis depends on D10, which acts as the Proton donor. Residues D19 and D99 each coordinate substrate. D179 lines the Mg(2+) pocket.

The protein belongs to the HAD-like hydrolase superfamily. PHOSPHO family. Requires Mg(2+) as cofactor.

It catalyses the reaction pyridoxal 5'-phosphate + H2O = pyridoxal + phosphate. Functionally, phosphatase that has high activity toward pyridoxal 5'-phosphate (PLP). Also active at much lower level toward pyrophosphate, phosphoethanolamine (PEA), phosphocholine (PCho), phospho-l-tyrosine, fructose-6-phosphate, p-nitrophenyl phosphate, and h-glycerophosphate. This chain is Pyridoxal phosphate phosphatase PHOSPHO2 (PHOSPHO2), found in Bos taurus (Bovine).